Reading from the N-terminus, the 443-residue chain is Squalene synthase (443 aa).

2 consecutive transmembrane segments (helical) span residues 291 to 311 and 423 to 443; these read TSFN…ELVF and ILLL…VRII.

Belongs to the phytoene/squalene synthase family. The cofactor is Mg(2+).

Its subcellular location is the endoplasmic reticulum membrane. It carries out the reaction 2 (2E,6E)-farnesyl diphosphate + NADPH + H(+) = squalene + 2 diphosphate + NADP(+). It catalyses the reaction 2 (2E,6E)-farnesyl diphosphate + NADH + H(+) = squalene + 2 diphosphate + NAD(+). It functions in the pathway terpene metabolism; lanosterol biosynthesis; lanosterol from farnesyl diphosphate: step 1/3. Catalyzes the condensation of 2 two farnesyl pyrophosphate moieties to form squalene. It is the first committed enzyme of the sterol biosynthesis pathway. Required for the biosynthesis of ergosterol. This chain is Squalene synthase (ERG9), found in Cyberlindnera jadinii (Torula yeast).